The following is a 179-amino-acid chain: Large ribosomal subunit protein uL5 (179 aa).

This sequence belongs to the universal ribosomal protein uL5 family. In terms of assembly, part of the 50S ribosomal subunit; part of the 5S rRNA/L5/L18/L25 subcomplex. Contacts the 5S rRNA and the P site tRNA. Forms a bridge to the 30S subunit in the 70S ribosome.

Functionally, this is one of the proteins that bind and probably mediate the attachment of the 5S RNA into the large ribosomal subunit, where it forms part of the central protuberance. In the 70S ribosome it contacts protein S13 of the 30S subunit (bridge B1b), connecting the 2 subunits; this bridge is implicated in subunit movement. Contacts the P site tRNA; the 5S rRNA and some of its associated proteins might help stabilize positioning of ribosome-bound tRNAs. This Paramagnetospirillum magneticum (strain ATCC 700264 / AMB-1) (Magnetospirillum magneticum) protein is Large ribosomal subunit protein uL5.